A 278-amino-acid polypeptide reads, in one-letter code: Ribonuclease HII (278 aa).

The RNase H type-2 domain maps to 71-259 (WPVAGCDEAG…VAAAWDKHAP (189 aa)). A divalent metal cation contacts are provided by D77, E78, and D168.

This sequence belongs to the RNase HII family. Mn(2+) is required as a cofactor. The cofactor is Mg(2+).

The protein localises to the cytoplasm. The catalysed reaction is Endonucleolytic cleavage to 5'-phosphomonoester.. In terms of biological role, endonuclease that specifically degrades the RNA of RNA-DNA hybrids. The sequence is that of Ribonuclease HII from Rhodopseudomonas palustris (strain BisA53).